The following is a 201-amino-acid chain: ATP-dependent Clp protease proteolytic subunit (201 aa).

Serine 98 acts as the Nucleophile in catalysis. Histidine 123 is an active-site residue.

This sequence belongs to the peptidase S14 family. As to quaternary structure, fourteen ClpP subunits assemble into 2 heptameric rings which stack back to back to give a disk-like structure with a central cavity, resembling the structure of eukaryotic proteasomes.

It localises to the cytoplasm. It catalyses the reaction Hydrolysis of proteins to small peptides in the presence of ATP and magnesium. alpha-casein is the usual test substrate. In the absence of ATP, only oligopeptides shorter than five residues are hydrolyzed (such as succinyl-Leu-Tyr-|-NHMec, and Leu-Tyr-Leu-|-Tyr-Trp, in which cleavage of the -Tyr-|-Leu- and -Tyr-|-Trp bonds also occurs).. Its function is as follows. Cleaves peptides in various proteins in a process that requires ATP hydrolysis. Has a chymotrypsin-like activity. Plays a major role in the degradation of misfolded proteins. The protein is ATP-dependent Clp protease proteolytic subunit of Rickettsia typhi (strain ATCC VR-144 / Wilmington).